A 273-amino-acid polypeptide reads, in one-letter code: F-actin-capping protein subunit alpha (273 aa).

It belongs to the F-actin-capping protein alpha subunit family. Heterodimer of an alpha and a beta subunit.

It localises to the cytoplasm. The protein resides in the cytoskeleton. F-actin-capping proteins bind in a Ca(2+)-independent manner to the fast growing ends of actin filaments (barbed end) thereby blocking the exchange of subunits at these ends. Unlike other capping proteins (such as gelsolin and severin), these proteins do not sever actin filaments. The sequence is that of F-actin-capping protein subunit alpha (CAP1) from Gibberella zeae (strain ATCC MYA-4620 / CBS 123657 / FGSC 9075 / NRRL 31084 / PH-1) (Wheat head blight fungus).